The chain runs to 359 residues: Peptide chain release factor 1 (359 aa).

Residue Gln-235 is modified to N5-methylglutamine. Positions Ala-280 to Ile-306 are disordered.

It belongs to the prokaryotic/mitochondrial release factor family. Post-translationally, methylated by PrmC. Methylation increases the termination efficiency of RF1.

Its subcellular location is the cytoplasm. Peptide chain release factor 1 directs the termination of translation in response to the peptide chain termination codons UAG and UAA. This is Peptide chain release factor 1 from Rhizobium johnstonii (strain DSM 114642 / LMG 32736 / 3841) (Rhizobium leguminosarum bv. viciae).